We begin with the raw amino-acid sequence, 139 residues long: Putative lipoprotein LpqV (139 aa).

A signal peptide spans Met1–Gly25. Cys26 carries the N-palmitoyl cysteine lipid modification. Cys26 carries the S-diacylglycerol cysteine lipid modification.

The protein localises to the cell membrane. This chain is Putative lipoprotein LpqV (lpqV), found in Mycobacterium bovis (strain ATCC BAA-935 / AF2122/97).